The sequence spans 94 residues: MSVKGMAIALAVILCATVVQGFPMFKRGRCLCIGPGVKAVKVADIEKASIMYPSNNCDKIEVIITLKENKGQRCLNPKSKQARLIIKKVERKNF.

An N-terminal signal peptide occupies residues 1–21 (MSVKGMAIALAVILCATVVQG). Citrulline; by PAD2 is present on R27. 2 disulfides stabilise this stretch: C30–C57 and C32–C74.

Interacts with TNFAIP6 (via Link domain). High levels in peripheral blood leukocytes, pancreas and liver astrocytes. Moderate levels in thymus, spleen and lung. Low levels in placenta, prostate and small intestine. Also found in epidermal basal layer keratinocytes in skin disorders.

It localises to the secreted. Its function is as follows. Chemotactic for interleukin-activated T-cells but not unstimulated T-cells, neutrophils or monocytes. Induces calcium release in activated T-cells. Binds to CXCR3. May play an important role in CNS diseases which involve T-cell recruitment. May play a role in skin immune responses. The chain is C-X-C motif chemokine 11 (CXCL11) from Homo sapiens (Human).